A 118-amino-acid chain; its full sequence is Fluoride-specific ion channel FluC 1 (118 aa).

4 helical membrane-spanning segments follow: residues Phe5 to Leu25, Phe34 to Ser54, Ala56 to Phe76, and Tyr98 to Val118. Na(+)-binding residues include Gly71 and Thr74.

It belongs to the fluoride channel Fluc/FEX (TC 1.A.43) family.

It is found in the cell membrane. The enzyme catalyses fluoride(in) = fluoride(out). With respect to regulation, na(+) is not transported, but it plays an essential structural role and its presence is essential for fluoride channel function. Fluoride-specific ion channel. Important for reducing fluoride concentration in the cell, thus reducing its toxicity. The protein is Fluoride-specific ion channel FluC 1 of Listeria monocytogenes serotype 4b (strain F2365).